The sequence spans 142 residues: Large ribosomal subunit protein uL11 (142 aa).

This sequence belongs to the universal ribosomal protein uL11 family. In terms of assembly, part of the ribosomal stalk of the 50S ribosomal subunit. Interacts with L10 and the large rRNA to form the base of the stalk. L10 forms an elongated spine to which L12 dimers bind in a sequential fashion forming a multimeric L10(L12)X complex. Post-translationally, one or more lysine residues are methylated.

Its function is as follows. Forms part of the ribosomal stalk which helps the ribosome interact with GTP-bound translation factors. The sequence is that of Large ribosomal subunit protein uL11 from Akkermansia muciniphila (strain ATCC BAA-835 / DSM 22959 / JCM 33894 / BCRC 81048 / CCUG 64013 / CIP 107961 / Muc).